Consider the following 693-residue polypeptide: Lamina-associated polypeptide 2, isoforms alpha/zeta (693 aa).

The region spanning 5 to 48 is the LEM-like domain; the sequence is LEDPSVLTKDKLKSELVANNVTLPAGEQRKDVYVQLYLQHLTAR. Disordered regions lie at residues 48-113, 148-211, and 227-270; these read RNRP…DVTE, LREQ…LAST, and TRPP…KLAP. The linker stretch occupies residues 49–107; sequence NRPPLAAGANSKGPPDFSSDEEREPTPVLGSGASVGRGRGAVGRKATKKTDKPRLEDKD. 3 positions are modified to phosphoserine: Ser-59, Ser-66, and Ser-67. The residue at position 74 (Thr-74) is a Phosphothreonine. 2 positions are modified to phosphoserine: Ser-79 and Ser-82. Residues Arg-85 and Arg-87 each carry the omega-N-methylarginine modification. Residues 96 to 105 are compositionally biased toward basic and acidic residues; sequence KKTDKPRLED. In terms of domain architecture, LEM spans 108-152; the sequence is DLDVTELSNEELLDQLVRYGVNPGPIVGTTRKLYEKKLLKLREQG. Phosphothreonine is present on Thr-153. Residues 154-177 are compositionally biased toward polar residues; sequence ESRSSTPLPTVSSSAENTRQNGSN. 2 positions are modified to phosphoserine: Ser-155 and Ser-158. Thr-159 and Thr-163 each carry phosphothreonine. Ser-165 and Ser-167 each carry phosphoserine. The span at 178–190 shows a compositional bias: basic and acidic residues; that stretch reads DSDRYSDNDEGKK. A Nuclear localization signal motif is present at residues 190–196; that stretch reads KKEHKKV. Ser-206 bears the N6-acetyllysine mark. Over residues 245 to 254 the composition is skewed to basic and acidic residues; sequence TKRDPPRETC. Ser-310 carries the post-translational modification Phosphoserine. Arg-329 carries the omega-N-methylarginine modification. Residues 332-351 are disordered; the sequence is KSRAQPLRAEEPGVSDQSVF. Ser-349, Ser-352, Ser-368, Ser-420, and Ser-422 each carry phosphoserine. Residues 412–422 are compositionally biased toward low complexity; the sequence is QSSYQDSESLS. Positions 412–442 are disordered; sequence QSSYQDSESLSPPRKVPRLSEKPARGGDSGS. Positions 557–656 form a coiled coil; it reads TESCDKHLDL…MGRRYLWLKD (100 aa). N6-acetyllysine is present on Lys-655.

It belongs to the LEM family. Homooligomer. Interacts with LMNA, BANF1 and RB1 and with chromosomes. Associates directly or indirectly with lamins at specific cell-cycle stages. Interacts with CMTM6. In terms of processing, phosphorylated in a mitose-specific manner.

The protein localises to the nucleus. The protein resides in the chromosome. In terms of biological role, may be involved in the structural organization of the nucleus and in the post-mitotic nuclear assembly. Plays an important role, together with LMNA, in the nuclear anchorage of RB1. The protein is Lamina-associated polypeptide 2, isoforms alpha/zeta (Tmpo) of Mus musculus (Mouse).